Consider the following 307-residue polypeptide: Acetyl-coenzyme A carboxylase carboxyl transferase subunit beta (307 aa).

The segment at 1–21 (MAMADQRNDKPGRPAAQRERR) is disordered. The CoA carboxyltransferase N-terminal domain maps to 43-307 (LWVKCPETGE…MGRERLSPAA (265 aa)).

The protein belongs to the AccD/PCCB family. As to quaternary structure, acetyl-CoA carboxylase is a heterohexamer composed of biotin carboxyl carrier protein (AccB), biotin carboxylase (AccC) and two subunits each of ACCase subunit alpha (AccA) and ACCase subunit beta (AccD).

The protein localises to the cytoplasm. The enzyme catalyses N(6)-carboxybiotinyl-L-lysyl-[protein] + acetyl-CoA = N(6)-biotinyl-L-lysyl-[protein] + malonyl-CoA. The protein operates within lipid metabolism; malonyl-CoA biosynthesis; malonyl-CoA from acetyl-CoA: step 1/1. Functionally, component of the acetyl coenzyme A carboxylase (ACC) complex. Biotin carboxylase (BC) catalyzes the carboxylation of biotin on its carrier protein (BCCP) and then the CO(2) group is transferred by the transcarboxylase to acetyl-CoA to form malonyl-CoA. The chain is Acetyl-coenzyme A carboxylase carboxyl transferase subunit beta from Phenylobacterium zucineum (strain HLK1).